Reading from the N-terminus, the 376-residue chain is Glutamate 5-kinase (376 aa).

Lys16 contributes to the ATP binding site. Residues Ser56, Asp143, and Asn155 each coordinate substrate. 175 to 176 (TD) contributes to the ATP binding site. The PUA domain occupies 283-361 (RGALSLDEGA…RDIETTLGYV (79 aa)).

This sequence belongs to the glutamate 5-kinase family.

Its subcellular location is the cytoplasm. The catalysed reaction is L-glutamate + ATP = L-glutamyl 5-phosphate + ADP. It functions in the pathway amino-acid biosynthesis; L-proline biosynthesis; L-glutamate 5-semialdehyde from L-glutamate: step 1/2. Catalyzes the transfer of a phosphate group to glutamate to form L-glutamate 5-phosphate. The chain is Glutamate 5-kinase from Halorhodospira halophila (strain DSM 244 / SL1) (Ectothiorhodospira halophila (strain DSM 244 / SL1)).